Here is a 171-residue protein sequence, read N- to C-terminus: Transcription antitermination protein NusB (171 aa).

The protein belongs to the NusB family.

Its function is as follows. Involved in transcription antitermination. Required for transcription of ribosomal RNA (rRNA) genes. Binds specifically to the boxA antiterminator sequence of the ribosomal RNA (rrn) operons. This chain is Transcription antitermination protein NusB, found in Brucella melitensis biotype 1 (strain ATCC 23456 / CCUG 17765 / NCTC 10094 / 16M).